The primary structure comprises 257 residues: Steroid 5-alpha-reductase DET2 (257 aa).

A run of 6 helical transmembrane segments spans residues 11–31, 47–67, 78–97, 110–130, 151–171, and 200–220; these read FIVF…QFFT, ISPP…TIIV, LAFL…TIIY, FPLN…YIQS, IGLV…GVLL, and IMEW…AFFV.

It belongs to the steroid 5-alpha reductase family. In terms of tissue distribution, mostly expressed in leaves and hypocotyls and, to a lower extent, in stems, cotyledons, roots, seeds and callus.

The protein localises to the membrane. It catalyses the reaction a 3-oxo-5alpha-steroid + NADP(+) = a 3-oxo-Delta(4)-steroid + NADPH + H(+). It participates in plant hormone biosynthesis; brassinosteroid biosynthesis. With respect to regulation, repressed by steroid (4-MA, VG106, PD91, PD17, Finasteride) and non-steroid (AS601811, AFA27, AFA76, AFA131, AFA192) inhibitors; steroid inhibitors are generally more efficient. In terms of biological role, involved in a reduction step in the biosynthesis of the plant steroid, brassinolide (BL). Can use progesterone, testosterone, androstenedione and campestenone as substrate. The protein is Steroid 5-alpha-reductase DET2 of Solanum lycopersicum (Tomato).